The primary structure comprises 344 residues: tRNA N6-adenosine threonylcarbamoyltransferase (344 aa).

2 residues coordinate Fe cation: His-118 and His-122. Substrate-binding positions include Thr-141–Gly-145, Asp-174, Gly-187, and Asn-284. Fe cation is bound at residue Asp-312.

It belongs to the KAE1 / TsaD family. Requires Fe(2+) as cofactor.

The protein resides in the cytoplasm. The enzyme catalyses L-threonylcarbamoyladenylate + adenosine(37) in tRNA = N(6)-L-threonylcarbamoyladenosine(37) in tRNA + AMP + H(+). Functionally, required for the formation of a threonylcarbamoyl group on adenosine at position 37 (t(6)A37) in tRNAs that read codons beginning with adenine. Is involved in the transfer of the threonylcarbamoyl moiety of threonylcarbamoyl-AMP (TC-AMP) to the N6 group of A37, together with TsaE and TsaB. TsaD likely plays a direct catalytic role in this reaction. This chain is tRNA N6-adenosine threonylcarbamoyltransferase, found in Desulfotalea psychrophila (strain LSv54 / DSM 12343).